A 236-amino-acid chain; its full sequence is Transcriptional activator protein SolR (236 aa).

In terms of domain architecture, HTH luxR-type spans 169–234 (VPESNAVLTT…QAVVKAIATG (66 aa)). The segment at residues 193–212 (AYEIGQILRISERTVNFHVN) is a DNA-binding region (H-T-H motif).

It belongs to the autoinducer-regulated transcriptional regulatory protein family.

In Ralstonia solanacearum (Pseudomonas solanacearum), this protein is Transcriptional activator protein SolR (solR).